We begin with the raw amino-acid sequence, 250 residues long: ATP synthase subunit a (250 aa).

Transmembrane regions (helical) follow at residues 26–46 (FTNASLFMVATVGAAAGFLYL), 84–104 (FFPMVFSLFMFILTANLLGMV), 114–134 (IIVTFALAVFVIGTVLLYGFY), 143–163 (LFVPQGVPGALLPLVVAIEII), 193–213 (FVASLSAFGALGIGGAILPLI), and 216–236 (VALTGLEFLVAFLQAYVFAVL).

It belongs to the ATPase A chain family. As to quaternary structure, F-type ATPases have 2 components, CF(1) - the catalytic core - and CF(0) - the membrane proton channel. CF(1) has five subunits: alpha(3), beta(3), gamma(1), delta(1), epsilon(1). CF(0) has three main subunits: a(1), b(2) and c(9-12). The alpha and beta chains form an alternating ring which encloses part of the gamma chain. CF(1) is attached to CF(0) by a central stalk formed by the gamma and epsilon chains, while a peripheral stalk is formed by the delta and b chains.

The protein resides in the cell inner membrane. Key component of the proton channel; it plays a direct role in the translocation of protons across the membrane. This chain is ATP synthase subunit a, found in Rhizobium meliloti (strain 1021) (Ensifer meliloti).